Here is a 631-residue protein sequence, read N- to C-terminus: Phosphomethylpyrimidine synthase (631 aa).

Substrate contacts are provided by residues Asn239, Met268, Tyr297, His333, Ser353–Gly355, Asp394–Arg397, and Glu433. Residue His437 coordinates Zn(2+). Residue Tyr460 participates in substrate binding. His501 contacts Zn(2+). Residues Cys581, Cys584, and Cys589 each coordinate [4Fe-4S] cluster.

Belongs to the ThiC family. As to quaternary structure, homodimer. Requires [4Fe-4S] cluster as cofactor.

It carries out the reaction 5-amino-1-(5-phospho-beta-D-ribosyl)imidazole + S-adenosyl-L-methionine = 4-amino-2-methyl-5-(phosphooxymethyl)pyrimidine + CO + 5'-deoxyadenosine + formate + L-methionine + 3 H(+). Its pathway is cofactor biosynthesis; thiamine diphosphate biosynthesis. Its function is as follows. Catalyzes the synthesis of the hydroxymethylpyrimidine phosphate (HMP-P) moiety of thiamine from aminoimidazole ribotide (AIR) in a radical S-adenosyl-L-methionine (SAM)-dependent reaction. The protein is Phosphomethylpyrimidine synthase of Salmonella heidelberg (strain SL476).